A 147-amino-acid chain; its full sequence is Large ribosomal subunit protein bL9 (147 aa).

This sequence belongs to the bacterial ribosomal protein bL9 family.

Its function is as follows. Binds to the 23S rRNA. The protein is Large ribosomal subunit protein bL9 of Clostridium kluyveri (strain NBRC 12016).